The sequence spans 377 residues: Alanine racemase (377 aa).

The active-site Proton acceptor; specific for D-alanine is Lys39. Residue Lys39 is modified to N6-(pyridoxal phosphate)lysine. Position 137 (Arg137) interacts with substrate. Tyr266 functions as the Proton acceptor; specific for L-alanine in the catalytic mechanism. Met314 is a binding site for substrate.

It belongs to the alanine racemase family. Pyridoxal 5'-phosphate serves as cofactor.

The catalysed reaction is L-alanine = D-alanine. It participates in amino-acid biosynthesis; D-alanine biosynthesis; D-alanine from L-alanine: step 1/1. Its function is as follows. Catalyzes the interconversion of L-alanine and D-alanine. May also act on other amino acids. The sequence is that of Alanine racemase (alr) from Symbiobacterium thermophilum (strain DSM 24528 / JCM 14929 / IAM 14863 / T).